Reading from the N-terminus, the 707-residue chain is MADLEAVLADVSYLMAMEKSRSQPAARASKRIVLPDPSVRSIMQKFLEKSGDMKFDKIFNQKLGFLLLKDYAENVSESPCPQIKFYEAIKEYEKMETPDERLTKAREIYDHHIMVEMLAHAHNYSKESLQHVQYHLLKQNVPPDLFHRYVLEICDQLRGDIFQRFLESDKFTRFCQWKNLELNMQLTMNDFSVHRIIGRGGFGEVYGCRKADTGKMYAMKCLDKKRIKMKQGETLALNERIMLSLVSTGQDCPFIVCMTYAFQSPDKLCFILDLMNGGDLHYHLSQHGVFTEQEMIFYASEVILGLEHMHNRFVVYRDLKPANILLDENGHVRVSDLGLACDYSKKKPHASVGTHGYMAPEVLAKGVAYDSSADWFSLGCMLYKLLKGHSPFRQHKSKDKNEIDKMTLTQDIELPNEGLSKDCRDLLEGLLKRDVPDRLGCRGKGPTEVKEHPFFKDVDWQTVYLRRMTPPLIPPRGEVNAADAFDIGNFDDDEVKGVKLQDGDSDLYKNFNIVISERWQNEIAETIFEVVNQDADKAESKKRSKQKIKVAVEEKDSDVIVHGYIKKLGGPFTSAWQTKYGKLYPSRLELYPESLTAKPELVFMDQIEDVCAEMQTIKGETAIIVKLRDGFKEPKICLTNSDEISLKEWHTSLRTAHKVSQELLQRMGRKAIKIYGVNHDPMLSESERPGSVTRAFLNRASSVDSGV.

The interval 1–190 is N-terminal; it reads MADLEAVLAD…ELNMQLTMND (190 aa). In terms of domain architecture, RGS spans 54 to 175; the sequence is KFDKIFNQKL…LESDKFTRFC (122 aa). In terms of domain architecture, Protein kinase spans 191-455; the sequence is FSVHRIIGRG…PTEVKEHPFF (265 aa). ATP contacts are provided by residues 197 to 205 and K220; that span reads IGRGGFGEV. D318 (proton acceptor) is an active-site residue. An AGC-kinase C-terminal domain is found at 456–523; it reads KDVDWQTVYL…VISERWQNEI (68 aa). Residues 558 to 658 form the PH domain; that stretch reads DVIVHGYIKK…WHTSLRTAHK (101 aa).

It belongs to the protein kinase superfamily. AGC Ser/Thr protein kinase family. GPRK subfamily. Interacts with amx-2; the interaction promotes phosphorylation of amx-2. Expressed in many neurons in the adult including the ASH neurons and other sensory neurons, many interneurons, and motor neurons of the ventral nerve cord. Expressed broadly in head neurons and is detected in several head acetylcholine neurons including the AVA, AVB, AVD and AVE premotor interneurons, the SMD and RMD head motor neurons, and the AIN, AIY, SIA, SIB and SAA interneurons. Expressed in HSN motor neurons and VC4/VC5 motor neurons. Also expressed in vulval muscle cells. Expressed in premotor and RIS interneurons. Expressed in ciliated neurons such as AWA, AWB, AWC, ASH and ADF olfactory and nociceptive neurons, and in chemosensory ASH neurons. Expressed in RMG neurons and AVK interneurons.

The catalysed reaction is [G-protein-coupled receptor] + ATP = [G-protein-coupled receptor]-phosphate + ADP + H(+). In terms of biological role, specifically phosphorylates the activated forms of G protein-coupled receptors. Required in adult sensory neurons for chemotaxis. Plays a role in the ASH sensory neurons in the chemotaxis response to NaCl where it is likely to modulate the strength of the NaCl avoidance response which occurs at high NaCl concentrations. Required in the HSN motor neurons for normal egg laying by promoting phosphorylation of amine oxidase amx-2 which inhibits amx-2 activity, preventing metabolism of serotonin. Acts in head acetylcholine neurons to positively regulate locomotion. Inactivates dopamine receptor dop-3 which leads to inactivation of guanine nucleotide-binding protein G(o) subunit goa-1 and activation of the unc-77/nca-1 and nca-2 ion channel proteins. Acts as a positive regulator of swimming by inactivating two dopamine receptors, dop-3 in the premotor interneurons that negatively controls early swimming through the nca ion channel, and dop-1 in the RIS neuron that inhibits late-stage swimming via the signaling of FMRFamide-like neuropeptide flp-11. Controls movement quiescence by negatively regulating multiple targets including egl-4 in ciliated neurons, the level of ligands of the neuropeptide receptor npr-1 in RMG neurons, and the secretion of flp-1 from AVK interneurons. The sequence is that of G protein-coupled receptor kinase 2 (grk-2) from Caenorhabditis elegans.